Reading from the N-terminus, the 447-residue chain is Phosphoglucosamine mutase (447 aa).

The active-site Phosphoserine intermediate is the serine 103. The Mg(2+) site is built by serine 103, aspartate 242, aspartate 244, and aspartate 246. Position 103 is a phosphoserine (serine 103).

It belongs to the phosphohexose mutase family. It depends on Mg(2+) as a cofactor. Activated by phosphorylation.

The enzyme catalyses alpha-D-glucosamine 1-phosphate = D-glucosamine 6-phosphate. Catalyzes the conversion of glucosamine-6-phosphate to glucosamine-1-phosphate. The protein is Phosphoglucosamine mutase of Paracoccus denitrificans (strain Pd 1222).